Consider the following 492-residue polypeptide: Sestrin-1 (492 aa).

The segment at 71–252 is N-terminal domain; may mediate the alkylhydroperoxide reductase activity; the sequence is FADSFAALGR…ICDITNGNHS (182 aa). Residue Cys130 is the Cysteine sulfenic acid (-SOH) intermediate of the active site. Residues Ser293 and Ser314 each carry the phosphoserine modification. The tract at residues 321–492 is C-terminal domain; mediates TORC1 regulation; that stretch reads PARDVSRHFE…ALRAITRYMT (172 aa). L-leucine is bound by residues 386–389, Thr398, and Glu463; that span reads TYNT.

The protein belongs to the sestrin family. As to quaternary structure, interacts with the GATOR2 complex which is composed of MIOS, SEC13, SEH1L, WDR24 and WDR59; the interaction is negatively regulated by leucine. Interacts with RRAGA, RRAGB, RRAGC and RRAGD; may function as a guanine nucleotide dissociation inhibitor for RRAGs and regulate them. Interacts with KEAP1, RBX1 and SQSTM1; in the SQSTM1-dependent autophagic degradation of KEAP1. May interact with PRDX1. In terms of tissue distribution, highly expressed in heart and also detected in liver and skeletal muscles (at protein level).

It localises to the nucleus. The protein resides in the cytoplasm. It catalyses the reaction a hydroperoxide + L-cysteinyl-[protein] = S-hydroxy-L-cysteinyl-[protein] + an alcohol. Functions as an intracellular leucine sensor that negatively regulates the TORC1 signaling pathway through the GATOR complex. In absence of leucine, binds the GATOR subcomplex GATOR2 and prevents TORC1 signaling. Binding of leucine to SESN2 disrupts its interaction with GATOR2 thereby activating the TORC1 signaling pathway. This stress-inducible metabolic regulator may also play a role in protection against oxidative and genotoxic stresses. May positively regulate the transcription by NFE2L2 of genes involved in the response to oxidative stress by facilitating the SQSTM1-mediated autophagic degradation of KEAP1. Moreover, may prevent the accumulation of reactive oxygen species (ROS) through the alkylhydroperoxide reductase activity born by the N-terminal domain of the protein. Was originally reported to contribute to oxidative stress resistance by reducing PRDX1. However, this could not be confirmed. In Mus musculus (Mouse), this protein is Sestrin-1.